A 188-amino-acid polypeptide reads, in one-letter code: Ubiquitin-like protein 4B (188 aa).

Positions 1 to 76 constitute a Ubiquitin-like domain; that stretch reads MFLTVKLLLG…INVIMRPPED (76 aa). The interval 146 to 188 is disordered; sequence EEKEAPAVASELEQNNGGGGGGGGTGGEGGGKKEEEEGEEADQ. Positions 161-174 are enriched in gly residues; sequence NGGGGGGGGTGGEG.

In terms of tissue distribution, expressed specifically in post-meiotic male germ cells of the testis. Abundantly expressed in stage 14-16 spermatids.

It localises to the cytoplasm. The chain is Ubiquitin-like protein 4B (Ubl4b) from Mus musculus (Mouse).